A 380-amino-acid polypeptide reads, in one-letter code: Flap endonuclease 1 (380 aa).

The interval 1–104 is N-domain; it reads MGIQGLAKLI…GELAKRSERR (104 aa). A Symmetric dimethylarginine; by PRMT5 modification is found at arginine 19. Aspartate 34 is a binding site for Mg(2+). Positions 47 and 70 each coordinate DNA. Lysine 80 is subject to N6-acetyllysine. Aspartate 86 is a binding site for Mg(2+). Arginine 100 and arginine 104 each carry symmetric dimethylarginine; by PRMT5. The tract at residues 122 to 253 is I-domain; it reads EVEKFTKRLV…KRAVDLIQKH (132 aa). Positions 158, 160, 179, and 181 each coordinate Mg(2+). Glutamate 158 serves as a coordination point for DNA. Phosphoserine; by CDK2 is present on serine 187. Arginine 192 carries the symmetric dimethylarginine; by PRMT5 modification. Serine 197 carries the phosphoserine modification. Residues glycine 231 and aspartate 233 each contribute to the DNA site. Position 233 (aspartate 233) interacts with Mg(2+). Phosphoserine is present on residues serine 255, serine 293, and serine 335. The tract at residues 327-380 is disordered; sequence RLSKSRQGSTQGRLDDFFKVTGSLSSAKRKEPEPKGSTKKKAKTGAAGKFKRGK. Position 336 is a phosphothreonine (threonine 336). Residues 336-344 are interaction with PCNA; the sequence is TQGRLDDFF. Lysine 354 is modified (N6-acetyllysine). Basic residues predominate over residues 363–380; that stretch reads STKKKAKTGAAGKFKRGK. Position 364 is a phosphothreonine (threonine 364). N6-acetyllysine is present on residues lysine 375, lysine 377, and lysine 380.

The protein belongs to the XPG/RAD2 endonuclease family. FEN1 subfamily. Interacts with PCNA. Three molecules of FEN1 bind to one PCNA trimer with each molecule binding to one PCNA monomer. PCNA stimulates the nuclease activity without altering cleavage specificity. The C-terminal domain binds EP300; can bind simultaneously to both PCNA and EP300. Interacts with DDX11; this interaction is direct and increases flap endonuclease activity of FEN1. Interacts with WDR4; regulating its endonuclease activity. Interacts with POLB. Mg(2+) is required as a cofactor. Acetylated by EP300. Acetylation inhibits both endonuclease and exonuclease activity. Acetylation also reduces DNA-binding activity but does not affect interaction with PCNA or EP300. In terms of processing, phosphorylation upon DNA damage induces relocalization to the nuclear plasma. Phosphorylation at Ser-187 by CDK2 occurs during late S-phase and results in dissociation from PCNA. Post-translationally, methylation at Arg-192 by PRMT5 impedes Ser-187 phosphorylation and increases interaction with PCNA.

The protein resides in the nucleus. Its subcellular location is the nucleolus. It is found in the nucleoplasm. The protein localises to the mitochondrion. Its function is as follows. Structure-specific nuclease with 5'-flap endonuclease and 5'-3' exonuclease activities involved in DNA replication and repair. During DNA replication, cleaves the 5'-overhanging flap structure that is generated by displacement synthesis when DNA polymerase encounters the 5'-end of a downstream Okazaki fragment. It enters the flap from the 5'-end and then tracks to cleave the flap base, leaving a nick for ligation. Also involved in the long patch base excision repair (LP-BER) pathway, by cleaving within the apurinic/apyrimidinic (AP) site-terminated flap. Acts as a genome stabilization factor that prevents flaps from equilibrating into structures that lead to duplications and deletions. Also possesses 5'-3' exonuclease activity on nicked or gapped double-stranded DNA, and exhibits RNase H activity. Also involved in replication and repair of rDNA and in repairing mitochondrial DNA. The polypeptide is Flap endonuclease 1 (Homo sapiens (Human)).